A 413-amino-acid polypeptide reads, in one-letter code: Putative F-box/kelch-repeat protein At4g22430 (413 aa).

The F-box domain occupies 5 to 54 (NNTITDVLEGIVTEILVRLPLRSISRFKSVSQTWKSAIESVYFRRLFVSL). A Kelch repeat occupies 168-210 (NMFLNKGEMYMPLYVYSSETGFWIHKEVVCPVRLPNFYDPISL).

The protein is Putative F-box/kelch-repeat protein At4g22430 of Arabidopsis thaliana (Mouse-ear cress).